The sequence spans 433 residues: Probable phosphoglucosamine mutase (433 aa).

The Phosphoserine intermediate role is filled by Ser-91. The Mg(2+) site is built by Ser-91, Asp-229, Asp-231, and Asp-233. Ser-91 carries the phosphoserine modification.

This sequence belongs to the phosphohexose mutase family. Mg(2+) is required as a cofactor. In terms of processing, activated by phosphorylation.

It carries out the reaction alpha-D-glucosamine 1-phosphate = D-glucosamine 6-phosphate. In terms of biological role, catalyzes the conversion of glucosamine-6-phosphate to glucosamine-1-phosphate. The sequence is that of Probable phosphoglucosamine mutase from Methanococcoides burtonii (strain DSM 6242 / NBRC 107633 / OCM 468 / ACE-M).